A 317-amino-acid chain; its full sequence is Coproporphyrinogen-III oxidase, aerobic 1 (317 aa).

The interval 38–47 is important for dimerization; sequence VLRDGAIFEQ. Position 82 (serine 82) interacts with substrate. The active-site Proton donor is histidine 96. Substrate is bound by residues 98–100 and 269–274; these read NYR and NGRTES. An important for dimerization region spans residues 251–286; it reads YVEFNLVYDRGTIFGLQTNGRTESILMSLPPLVRWE.

Belongs to the aerobic coproporphyrinogen-III oxidase family. As to quaternary structure, homodimer.

Its subcellular location is the cytoplasm. It carries out the reaction coproporphyrinogen III + O2 + 2 H(+) = protoporphyrinogen IX + 2 CO2 + 2 H2O. The protein operates within porphyrin-containing compound metabolism; protoporphyrin-IX biosynthesis; protoporphyrinogen-IX from coproporphyrinogen-III (O2 route): step 1/1. Key enzyme in heme biosynthesis. Catalyzes the oxidative decarboxylation of propionic acid side chains of rings A and B of coproporphyrinogen III. The chain is Coproporphyrinogen-III oxidase, aerobic 1 from Nostoc sp. (strain PCC 7120 / SAG 25.82 / UTEX 2576).